The following is a 310-amino-acid chain: MAALLRLAVLLPLAAPLVATLPTSPVPIAARATPHEPVFFSWDAGAVTSFPIHSSCNATQRRQIEAGLNEAVELARHAKAHILRWGNESEIYRKYFGNRPTMEAVGAYDVIVNGDKANVLFRCDNPDGNCALEGWGGHWRGANATSETVICDRSYTTRRWLVSMCSQGYTVAGSETNTFWASDLMHRLYHVPAVGQGWVDHFADGYDEVIALAKSNGTESTHDSEALQYFALEAYAFDIAAPGVGCAGESHGPDQGHDTGSASAPASTSTSSSSSGSGSGATTTPTDSPSATIDVPSNCHTHEGGQLHCT.

A signal peptide spans 1-16 (MAALLRLAVLLPLAAP). Asn57, Asn87, Asn143, and Asn216 each carry an N-linked (GlcNAc...) asparagine glycan. Residues 247-310 (AGESHGPDQG…THEGGQLHCT (64 aa)) are disordered. Over residues 258–292 (DTGSASAPASTSTSSSSSGSGSGATTTPTDSPSAT) the composition is skewed to low complexity. A compositionally biased stretch (basic and acidic residues) spans 300–310 (HTHEGGQLHCT).

Belongs to the ZPS1 family.

It is found in the secreted. The sequence is that of Major allergen Asp f 2 from Aspergillus fumigatus (strain ATCC MYA-4609 / CBS 101355 / FGSC A1100 / Af293) (Neosartorya fumigata).